A 266-amino-acid polypeptide reads, in one-letter code: MLPYPQIDPVAIALGPLKIHWYGLMYLVGIGGAWWLASRRLARFDASWSKEKLSDLVFWVAMGVILGGRLGYVFFYDFAAYIAEPAKILRVWEGGMSFHGGLIGVMLATWWFGKRNGKSFFELMDFIAPLVPIGLGAGRIGNFINAELWGKATDVPWAMVFPTDPEQLARHPSQLYQFALEGVALFTILWFYSRKPRPTMAVSGMFAACYGVFRFIVEFVRVPDAQLGYLAWGWLTMGQILCLPMILGGIGLIAYAYKRQPVQGAA.

7 helical membrane passes run 10–30 (VAIA…LVGI), 56–76 (LVFW…VFFY), 92–112 (WEGG…TWWF), 120–140 (FFEL…AGRI), 172–192 (PSQL…LWFY), 200–220 (MAVS…VEFV), and 234–254 (WLTM…GLIA). R139 contributes to the a 1,2-diacyl-sn-glycero-3-phospho-(1'-sn-glycerol) binding site.

Belongs to the Lgt family.

Its subcellular location is the cell inner membrane. It carries out the reaction L-cysteinyl-[prolipoprotein] + a 1,2-diacyl-sn-glycero-3-phospho-(1'-sn-glycerol) = an S-1,2-diacyl-sn-glyceryl-L-cysteinyl-[prolipoprotein] + sn-glycerol 1-phosphate + H(+). It participates in protein modification; lipoprotein biosynthesis (diacylglyceryl transfer). Catalyzes the transfer of the diacylglyceryl group from phosphatidylglycerol to the sulfhydryl group of the N-terminal cysteine of a prolipoprotein, the first step in the formation of mature lipoproteins. This Ectopseudomonas mendocina (strain ymp) (Pseudomonas mendocina) protein is Phosphatidylglycerol--prolipoprotein diacylglyceryl transferase.